The following is a 203-amino-acid chain: ATP-dependent Clp protease proteolytic subunit (203 aa).

The Nucleophile role is filled by S107. Residue H132 is part of the active site.

Belongs to the peptidase S14 family. In terms of assembly, fourteen ClpP subunits assemble into 2 heptameric rings which stack back to back to give a disk-like structure with a central cavity, resembling the structure of eukaryotic proteasomes.

The protein resides in the cytoplasm. The catalysed reaction is Hydrolysis of proteins to small peptides in the presence of ATP and magnesium. alpha-casein is the usual test substrate. In the absence of ATP, only oligopeptides shorter than five residues are hydrolyzed (such as succinyl-Leu-Tyr-|-NHMec, and Leu-Tyr-Leu-|-Tyr-Trp, in which cleavage of the -Tyr-|-Leu- and -Tyr-|-Trp bonds also occurs).. Functionally, cleaves peptides in various proteins in a process that requires ATP hydrolysis. Has a chymotrypsin-like activity. Plays a major role in the degradation of misfolded proteins. This is ATP-dependent Clp protease proteolytic subunit from Pelagibacter ubique (strain HTCC1062).